The chain runs to 114 residues: Histone H3-5 (114 aa).

A disordered region spans residues 1–29; it reads NTGAKAPRKQLANKAARKSTNVNAVSGVK.

This sequence belongs to the histone H3 family. The nucleosome is a histone octamer containing two molecules each of H2A, H2B, H3 and H4 assembled in one H3-H4 heterotetramer and two H2A-H2B heterodimers. The octamer wraps approximately 147 bp of DNA.

The protein resides in the nucleus. It is found in the chromosome. Its function is as follows. Core component of nucleosome. Nucleosomes wrap and compact DNA into chromatin, limiting DNA accessibility to the cellular machineries which require DNA as a template. Histones thereby play a central role in transcription regulation, DNA repair, DNA replication and chromosomal stability. DNA accessibility is regulated via a complex set of post-translational modifications of histones, also called histone code, and nucleosome remodeling. In Stylonychia lemnae (Ciliate), this protein is Histone H3-5 (H3-5).